Reading from the N-terminus, the 929-residue chain is Type I restriction enzyme SauCOLORF180P endonuclease subunit (929 aa).

Residues 254–418 (QQATETGNNG…DGRTTADIFG (165 aa)) enclose the Helicase ATP-binding domain. ATP is bound at residue 268–274 (TTGSGKT).

Belongs to the HsdR family. The type I restriction/modification system is composed of three polypeptides R, M and S.

It carries out the reaction Endonucleolytic cleavage of DNA to give random double-stranded fragments with terminal 5'-phosphates, ATP is simultaneously hydrolyzed.. Its function is as follows. The restriction (R) subunit of a type I restriction enzyme that recognizes an undetermined sequence and cleaves a random distance away. Subunit R is required for both nuclease and ATPase activities, but not for modification. After locating a non-methylated recognition site, the enzyme complex serves as a molecular motor that translocates DNA in an ATP-dependent manner until a collision occurs that triggers cleavage. This Staphylococcus aureus (strain COL) protein is Type I restriction enzyme SauCOLORF180P endonuclease subunit.